The chain runs to 309 residues: Ribonuclease Z (309 aa).

His-63, His-65, Asp-67, His-68, His-145, Asp-216, and His-274 together coordinate Zn(2+). Asp-67 acts as the Proton acceptor in catalysis.

Belongs to the RNase Z family. As to quaternary structure, homodimer. It depends on Zn(2+) as a cofactor.

The enzyme catalyses Endonucleolytic cleavage of RNA, removing extra 3' nucleotides from tRNA precursor, generating 3' termini of tRNAs. A 3'-hydroxy group is left at the tRNA terminus and a 5'-phosphoryl group is left at the trailer molecule.. Its function is as follows. Zinc phosphodiesterase, which displays some tRNA 3'-processing endonuclease activity. Probably involved in tRNA maturation, by removing a 3'-trailer from precursor tRNA. This Streptococcus gordonii (strain Challis / ATCC 35105 / BCRC 15272 / CH1 / DL1 / V288) protein is Ribonuclease Z.